The primary structure comprises 311 residues: Acetyl-coenzyme A carboxylase carboxyl transferase subunit beta (311 aa).

A CoA carboxyltransferase N-terminal domain is found at 32–299 (LWVKCPVSEE…TSMPAALTPP (268 aa)). Residues 291–311 (SMPAALTPPAPDHVVADGGSH) are disordered.

The protein belongs to the AccD/PCCB family. Acetyl-CoA carboxylase is a heterohexamer composed of biotin carboxyl carrier protein (AccB), biotin carboxylase (AccC) and two subunits each of ACCase subunit alpha (AccA) and ACCase subunit beta (AccD).

Its subcellular location is the cytoplasm. It carries out the reaction N(6)-carboxybiotinyl-L-lysyl-[protein] + acetyl-CoA = N(6)-biotinyl-L-lysyl-[protein] + malonyl-CoA. Its pathway is lipid metabolism; malonyl-CoA biosynthesis; malonyl-CoA from acetyl-CoA: step 1/1. Component of the acetyl coenzyme A carboxylase (ACC) complex. Biotin carboxylase (BC) catalyzes the carboxylation of biotin on its carrier protein (BCCP) and then the CO(2) group is transferred by the transcarboxylase to acetyl-CoA to form malonyl-CoA. This Maricaulis maris (strain MCS10) (Caulobacter maris) protein is Acetyl-coenzyme A carboxylase carboxyl transferase subunit beta.